Here is a 154-residue protein sequence, read N- to C-terminus: MQHYETVEAVTFAYGQHHHLEIQITREIAKEQGIRHHILDMSLLGQITAQPDFATIHISYIPDKLCVESKSLKLYLFSYRNHGDFHENCINTIGKDLVNLLDPRYLEVWGKFTPRGGISIDPYYNYGKQGTKYEGLAEQRLFQHDLYPEKIDNR.

The Proton donor role is filled by aspartate 52. Residues valine 67–serine 69 and histidine 86–glutamate 87 contribute to the substrate site.

Belongs to the GTP cyclohydrolase I family. QueF type 1 subfamily.

It is found in the cytoplasm. It catalyses the reaction 7-aminomethyl-7-carbaguanine + 2 NADP(+) = 7-cyano-7-deazaguanine + 2 NADPH + 3 H(+). Its pathway is tRNA modification; tRNA-queuosine biosynthesis. In terms of biological role, catalyzes the NADPH-dependent reduction of 7-cyano-7-deazaguanine (preQ0) to 7-aminomethyl-7-deazaguanine (preQ1). The chain is Putative NADPH-dependent 7-cyano-7-deazaguanine reductase from Streptococcus pneumoniae (strain ATCC BAA-255 / R6).